A 1749-amino-acid chain; its full sequence is Intraflagellar transport protein 172 homolog (1749 aa).

N-acetylmethionine is present on methionine 1. Residue lysine 4 forms a Glycyl lysine isopeptide (Lys-Gly) (interchain with G-Cter in SUMO1) linkage. 9 WD repeats span residues 14 to 53 (DGAA…RDKF), 64 to 103 (RKSY…GDKK), 110 to 148 (IQTS…SSTI), 150 to 191 (GTES…ESQG), 195 to 233 (NHPC…QTFD), 238 to 278 (PQER…WEEA), 284 to 323 (TNLY…SIYK), 483 to 520 (SHES…CSKT), and 521 to 559 (MILN…ERVT). The TPR 1 repeat unit spans residues 593–624 (DEGLIEFGTAIDDGNYIRATAFLETLEMTPET). Position 672 is an omega-N-methylarginine (arginine 672). TPR repeat units lie at residues 692 to 725 (EKNY…DECI), 809 to 842 (GELY…MKAV), 854 to 887 (VKLE…IKAI), 912 to 945 (SKYY…KDAI), 947 to 970 (MYTQ…PEDV), 971 to 1004 (SVLY…DLAI), 1042 to 1075 (EGRL…EEAY), 1142 to 1175 (PEVH…KEAV), 1276 to 1309 (VEGF…GNSG), 1345 to 1378 (IGKH…NKAK), 1411 to 1445 (GVDV…LHKY), 1447 to 1477 (ALYA…NPQN), and 1574 to 1607 (DKAF…TDAI).

Belongs to the IFT172 family. As to quaternary structure, interacts with IFT88. Interacts with IFT57. Interacts with RABL2/RABL2A; binds preferentially to GDP-bound RABL2.

It localises to the cell projection. Its subcellular location is the cilium. Its function is as follows. Required for the maintenance and formation of cilia. Plays an indirect role in hedgehog (Hh) signaling, cilia being required for all activity of the hedgehog pathway. The sequence is that of Intraflagellar transport protein 172 homolog (IFT172) from Homo sapiens (Human).